The chain runs to 195 residues: Imidazoleglycerol-phosphate dehydratase (195 aa).

This sequence belongs to the imidazoleglycerol-phosphate dehydratase family.

It is found in the cytoplasm. The catalysed reaction is D-erythro-1-(imidazol-4-yl)glycerol 3-phosphate = 3-(imidazol-4-yl)-2-oxopropyl phosphate + H2O. Its pathway is amino-acid biosynthesis; L-histidine biosynthesis; L-histidine from 5-phospho-alpha-D-ribose 1-diphosphate: step 6/9. This is Imidazoleglycerol-phosphate dehydratase from Bordetella avium (strain 197N).